Consider the following 221-residue polypeptide: 2-amino-5-formylamino-6-ribosylaminopyrimidin-4(3H)-one 5'-monophosphate deformylase (221 aa).

Residues Glu29, His31, Asp40, and His108 each contribute to the Fe cation site.

This sequence belongs to the creatininase superfamily. FAPy deformylase family. Homodimer. Fe(2+) serves as cofactor. It depends on Zn(2+) as a cofactor.

The catalysed reaction is 2-amino-5-formylamino-6-(5-phospho-D-ribosylamino)pyrimidin-4(3H)-one + H2O = 2,5-diamino-6-(1-D-ribosylamino)pyrimidin-4(3H)-one 5'-phosphate + formate + H(+). Its pathway is cofactor biosynthesis; coenzyme F420 biosynthesis. It functions in the pathway cofactor biosynthesis; riboflavin biosynthesis. In terms of biological role, catalyzes the hydrolysis of the formamide of 2-amino-5-formylamino-6-ribosylamino-4(3H)-pyrimidinone 5'-monophosphate (FAPy) to form 2,5-diamino-6-ribosylamino-4(3H)-pyrimidinone 5'-phosphate (APy). The chain is 2-amino-5-formylamino-6-ribosylaminopyrimidin-4(3H)-one 5'-monophosphate deformylase from Methanococcus maripaludis (strain C7 / ATCC BAA-1331).